The primary structure comprises 193 residues: Potassium-transporting ATPase KdpC subunit (193 aa).

A helical membrane pass occupies residues 14 to 34; the sequence is ITFTFLVLCGLVYPLIVTGIA.

The protein belongs to the KdpC family. The system is composed of three essential subunits: KdpA, KdpB and KdpC.

The protein localises to the cell membrane. Its function is as follows. Part of the high-affinity ATP-driven potassium transport (or Kdp) system, which catalyzes the hydrolysis of ATP coupled with the electrogenic transport of potassium into the cytoplasm. This subunit acts as a catalytic chaperone that increases the ATP-binding affinity of the ATP-hydrolyzing subunit KdpB by the formation of a transient KdpB/KdpC/ATP ternary complex. This chain is Potassium-transporting ATPase KdpC subunit, found in Bacillus cereus (strain B4264).